The following is a 483-amino-acid chain: Regulatory protein ViaA (483 aa).

Belongs to the ViaA family. Homodimer. Interacts with RavA.

It is found in the cytoplasm. Its function is as follows. Component of the RavA-ViaA chaperone complex, which may act on the membrane to optimize the function of some of the respiratory chains. ViaA stimulates the ATPase activity of RavA. The polypeptide is Regulatory protein ViaA (Salmonella choleraesuis (strain SC-B67)).